The following is a 423-amino-acid chain: Anthranilate 1,2-dioxygenase large subunit (423 aa).

Positions tryptophan 53–alanine 168 constitute a Rieske domain. Residues cysteine 95, histidine 97, cysteine 115, and histidine 118 each contribute to the [2Fe-2S] cluster site. Histidine 223, histidine 228, and aspartate 370 together coordinate Fe cation.

Belongs to the bacterial ring-hydroxylating dioxygenase alpha subunit family. In terms of assembly, part of a multicomponent enzyme system composed of a reductase (AndAa), a ferredoxin (AndAb) and a two-subunit oxygenase component (AndAc and AndAd). It depends on Fe cation as a cofactor. [2Fe-2S] cluster is required as a cofactor.

The catalysed reaction is anthranilate + NADH + O2 + 3 H(+) = catechol + NH4(+) + CO2 + NAD(+). The enzyme catalyses anthranilate + NADPH + O2 + 3 H(+) = catechol + NH4(+) + CO2 + NADP(+). It participates in aromatic compound metabolism; anthranilate degradation via hydroxylation; catechol from anthranilate: step 1/1. Its function is as follows. Oxygenase component of anthranilate dioxygenase multicomponent enzyme system which catalyzes the incorporation of both atoms of molecular oxygen into anthranilate to form catechol. Can also act on benzoate and salicylate but not on 2-chlorobenzoate or o-toluate. This chain is Anthranilate 1,2-dioxygenase large subunit, found in Burkholderia cepacia (Pseudomonas cepacia).